The sequence spans 155 residues: Ribosomal RNA large subunit methyltransferase H (155 aa).

Residues L72, G103, and L122–W127 each bind S-adenosyl-L-methionine.

The protein belongs to the RNA methyltransferase RlmH family. In terms of assembly, homodimer.

The protein resides in the cytoplasm. The enzyme catalyses pseudouridine(1915) in 23S rRNA + S-adenosyl-L-methionine = N(3)-methylpseudouridine(1915) in 23S rRNA + S-adenosyl-L-homocysteine + H(+). In terms of biological role, specifically methylates the pseudouridine at position 1915 (m3Psi1915) in 23S rRNA. The sequence is that of Ribosomal RNA large subunit methyltransferase H from Cereibacter sphaeroides (strain ATCC 17029 / ATH 2.4.9) (Rhodobacter sphaeroides).